Consider the following 230-residue polypeptide: Urease accessory protein UreF (230 aa).

This sequence belongs to the UreF family. UreD, UreF and UreG form a complex that acts as a GTP-hydrolysis-dependent molecular chaperone, activating the urease apoprotein by helping to assemble the nickel containing metallocenter of UreC. The UreE protein probably delivers the nickel.

It is found in the cytoplasm. Its function is as follows. Required for maturation of urease via the functional incorporation of the urease nickel metallocenter. The protein is Urease accessory protein UreF of Cupriavidus necator (strain ATCC 17699 / DSM 428 / KCTC 22496 / NCIMB 10442 / H16 / Stanier 337) (Ralstonia eutropha).